The following is a 90-amino-acid chain: Probable Fe(2+)-trafficking protein (90 aa).

The protein belongs to the Fe(2+)-trafficking protein family. In terms of assembly, monomer.

Functionally, could be a mediator in iron transactions between iron acquisition and iron-requiring processes, such as synthesis and/or repair of Fe-S clusters in biosynthetic enzymes. This chain is Probable Fe(2+)-trafficking protein, found in Pectobacterium carotovorum subsp. carotovorum (strain PC1).